Consider the following 417-residue polypeptide: NADH-quinone oxidoreductase subunit D (417 aa).

It belongs to the complex I 49 kDa subunit family. As to quaternary structure, NDH-1 is composed of 14 different subunits. Subunits NuoB, C, D, E, F, and G constitute the peripheral sector of the complex.

It localises to the cell inner membrane. The enzyme catalyses a quinone + NADH + 5 H(+)(in) = a quinol + NAD(+) + 4 H(+)(out). NDH-1 shuttles electrons from NADH, via FMN and iron-sulfur (Fe-S) centers, to quinones in the respiratory chain. The immediate electron acceptor for the enzyme in this species is believed to be ubiquinone. Couples the redox reaction to proton translocation (for every two electrons transferred, four hydrogen ions are translocated across the cytoplasmic membrane), and thus conserves the redox energy in a proton gradient. The chain is NADH-quinone oxidoreductase subunit D from Francisella tularensis subsp. tularensis (strain FSC 198).